The following is a 150-amino-acid chain: Large ribosomal subunit protein bL9 (150 aa).

The protein belongs to the bacterial ribosomal protein bL9 family.

Functionally, binds to the 23S rRNA. This is Large ribosomal subunit protein bL9 from Paracidovorax citrulli (strain AAC00-1) (Acidovorax citrulli).